The primary structure comprises 411 residues: Adherens junction-associated protein 1 (411 aa).

The first 43 residues, 1-43 (MWIQQLLGLSSMPIRWPGRSLGSHLWILIAMLQLAVDFPSCDS), serve as a signal peptide directing secretion. Residues 44 to 283 (LGPGPEFRLL…GETSGLAVHQ (240 aa)) are Extracellular-facing. Composition is skewed to low complexity over residues 62–76 (LWSLRTGPPTRLPTP), 121–145 (PPAATRSSPSLTSASASSSMTAGAA), and 247–264 (TPVGVSTTEPSTSPSNNG). Disordered stretches follow at residues 62–156 (LWSL…RGRR) and 242–270 (DPWKRTPVGVSTTEPSTSPSNNGKDIQPP). The helical transmembrane segment at 284–304 (IITITVSLIMVIAALITTLVL) threads the bilayer. The segment at 304–411 (LKNCCAPSGH…VSEKWFEISC (108 aa)) is targeting signals. At 305–411 (KNCCAPSGHT…VSEKWFEISC (107 aa)) the chain is on the cytoplasmic side.

As to quaternary structure, forms a complex with CDH1 and CTNNB1; interacts directly with CTNNB1. Interacts with AP1M2 and with isoform 2 of BSG/CD147.

The protein localises to the basolateral cell membrane. The protein resides in the apical cell membrane. It localises to the cell junction. Its subcellular location is the adherens junction. Functionally, plays a role in cell adhesion and cell migration. The protein is Adherens junction-associated protein 1 (Ajap1) of Rattus norvegicus (Rat).